The chain runs to 171 residues: Plastocyanin minor isoform, chloroplastic (171 aa).

Positions 73 to 171 (MEVLLGSDDG…AGMVGKLTVK (99 aa)) constitute a Plastocyanin-like domain. Residues His109, Cys156, His159, and Met164 each coordinate Cu cation.

This sequence belongs to the plastocyanin family. Cu(2+) is required as a cofactor.

Its subcellular location is the plastid. It localises to the chloroplast thylakoid membrane. Functionally, participates in electron transfer between P700 and the cytochrome b6-f complex in photosystem I. Seems to be a minor plastocyanin in Arabidopsis. This is Plastocyanin minor isoform, chloroplastic (PETE) from Arabidopsis thaliana (Mouse-ear cress).